The primary structure comprises 595 residues: Aspartate--tRNA(Asp/Asn) ligase (595 aa).

E177 lines the L-aspartate pocket. Residues 201-204 (QQFK) form an aspartate region. Residue R223 coordinates L-aspartate. Residues 223 to 225 (RDE) and Q232 each bind ATP. H455 contributes to the L-aspartate binding site. Residue E489 participates in ATP binding. R496 provides a ligand contact to L-aspartate. Position 542-545 (542-545 (GLDR)) interacts with ATP.

This sequence belongs to the class-II aminoacyl-tRNA synthetase family. Type 1 subfamily. In terms of assembly, homodimer.

It is found in the cytoplasm. The enzyme catalyses tRNA(Asx) + L-aspartate + ATP = L-aspartyl-tRNA(Asx) + AMP + diphosphate. Functionally, aspartyl-tRNA synthetase with relaxed tRNA specificity since it is able to aspartylate not only its cognate tRNA(Asp) but also tRNA(Asn). Reaction proceeds in two steps: L-aspartate is first activated by ATP to form Asp-AMP and then transferred to the acceptor end of tRNA(Asp/Asn). This chain is Aspartate--tRNA(Asp/Asn) ligase, found in Opitutus terrae (strain DSM 11246 / JCM 15787 / PB90-1).